We begin with the raw amino-acid sequence, 264 residues long: uncharacterized protein (264 aa).

13–20 (TGSTSGIG) contributes to the NADP(+) binding site. Serine 141 serves as a coordination point for substrate. The Proton acceptor role is filled by tyrosine 154.

Belongs to the short-chain dehydrogenases/reductases (SDR) family.

This is an uncharacterized protein from Bacillus subtilis (strain 168).